Here is a 473-residue protein sequence, read N- to C-terminus: NAD-dependent protein deacetylase SRT1 (473 aa).

The Deacetylase sirtuin-type domain maps to 27 to 267; sequence SHLLQCKIEE…AGVMESLNMK (241 aa). NAD(+)-binding positions include 52-71 and 114-117; these read GAGI…KGIW and QNVD. Catalysis depends on His134, which acts as the Proton acceptor. Cys142, Cys145, Cys167, and Cys172 together coordinate Zn(2+). Residues 209 to 211, 235 to 237, and Val253 each bind NAD(+); these read GTS and NLQ. Positions 447–473 are disordered; that stretch reads LEGSGTSRKRSRTGKRKSKALAEETKA. Positions 453–465 are enriched in basic residues; it reads SRKRSRTGKRKSK.

Belongs to the sirtuin family. Class IV subfamily. As to quaternary structure, binds to the promoter region of genes influenced by ethylene. Interacts with ENAP1; this interaction is enhanced in the presence of ethylene. The cofactor is Zn(2+).

The protein localises to the nucleus. The catalysed reaction is N(6)-acetyl-L-lysyl-[protein] + NAD(+) + H2O = 2''-O-acetyl-ADP-D-ribose + nicotinamide + L-lysyl-[protein]. Functionally, NAD-dependent protein deacetylase. Has deacetylase activity towards H3K9Ac. May have a function in the safeguard against genome instability and DNA damage to ensure plant cell growth. Involved in responses to ethylene leading to the transcriptional repression of some ethylene-responsive genes via the regulation of histone acetylation H3K9Ac. In Arabidopsis thaliana (Mouse-ear cress), this protein is NAD-dependent protein deacetylase SRT1.